Consider the following 492-residue polypeptide: Aspartyl/glutamyl-tRNA(Asn/Gln) amidotransferase subunit B (492 aa).

This sequence belongs to the GatB/GatE family. GatB subfamily. Heterotrimer of A, B and C subunits.

The enzyme catalyses L-glutamyl-tRNA(Gln) + L-glutamine + ATP + H2O = L-glutaminyl-tRNA(Gln) + L-glutamate + ADP + phosphate + H(+). The catalysed reaction is L-aspartyl-tRNA(Asn) + L-glutamine + ATP + H2O = L-asparaginyl-tRNA(Asn) + L-glutamate + ADP + phosphate + 2 H(+). In terms of biological role, allows the formation of correctly charged Asn-tRNA(Asn) or Gln-tRNA(Gln) through the transamidation of misacylated Asp-tRNA(Asn) or Glu-tRNA(Gln) in organisms which lack either or both of asparaginyl-tRNA or glutaminyl-tRNA synthetases. The reaction takes place in the presence of glutamine and ATP through an activated phospho-Asp-tRNA(Asn) or phospho-Glu-tRNA(Gln). This chain is Aspartyl/glutamyl-tRNA(Asn/Gln) amidotransferase subunit B, found in Prochlorococcus marinus (strain SARG / CCMP1375 / SS120).